The following is a 293-amino-acid chain: Histamine N-methyltransferase A (293 aa).

Residue Glu-28 participates in substrate binding. Positions 60, 89, 94, 120, and 142 each coordinate S-adenosyl-L-methionine. Asn-283 lines the substrate pocket.

This sequence belongs to the class I-like SAM-binding methyltransferase superfamily. HNMT family. As to quaternary structure, monomer.

Its subcellular location is the cytoplasm. The catalysed reaction is histamine + S-adenosyl-L-methionine = N(tau)-methylhistamine + S-adenosyl-L-homocysteine + H(+). In terms of biological role, inactivates histamine by N-methylation. Plays an important role in degrading histamine and in regulating the airway response to histamine. This chain is Histamine N-methyltransferase A (hnmt-a), found in Xenopus laevis (African clawed frog).